The primary structure comprises 218 residues: Peptide methionine sulfoxide reductase MsrA (218 aa).

A disordered region spans residues Met1–Pro28. Cys57 is an active-site residue.

This sequence belongs to the MsrA Met sulfoxide reductase family.

It carries out the reaction L-methionyl-[protein] + [thioredoxin]-disulfide + H2O = L-methionyl-(S)-S-oxide-[protein] + [thioredoxin]-dithiol. The catalysed reaction is [thioredoxin]-disulfide + L-methionine + H2O = L-methionine (S)-S-oxide + [thioredoxin]-dithiol. Functionally, has an important function as a repair enzyme for proteins that have been inactivated by oxidation. Catalyzes the reversible oxidation-reduction of methionine sulfoxide in proteins to methionine. This is Peptide methionine sulfoxide reductase MsrA from Brucella anthropi (strain ATCC 49188 / DSM 6882 / CCUG 24695 / JCM 21032 / LMG 3331 / NBRC 15819 / NCTC 12168 / Alc 37) (Ochrobactrum anthropi).